A 125-amino-acid polypeptide reads, in one-letter code: Large ribosomal subunit protein eL8 (125 aa).

It belongs to the eukaryotic ribosomal protein eL8 family. Part of the 50S ribosomal subunit. Probably part of the RNase P complex.

It is found in the cytoplasm. Functionally, multifunctional RNA-binding protein that recognizes the K-turn motif in ribosomal RNA, the RNA component of RNase P, box H/ACA, box C/D and box C'/D' sRNAs. The polypeptide is Large ribosomal subunit protein eL8 (Metallosphaera sedula (strain ATCC 51363 / DSM 5348 / JCM 9185 / NBRC 15509 / TH2)).